Here is a 166-residue protein sequence, read N- to C-terminus: Phosphopantetheine adenylyltransferase (166 aa).

S10 provides a ligand contact to substrate. Residues 10-11 and H18 contribute to the ATP site; that span reads SF. K42, A79, and R93 together coordinate substrate. ATP is bound by residues 94–96, E104, and 129–135; these read GLR and VRPITAT.

This sequence belongs to the bacterial CoaD family. In terms of assembly, homohexamer. The cofactor is Mg(2+).

The protein resides in the cytoplasm. The enzyme catalyses (R)-4'-phosphopantetheine + ATP + H(+) = 3'-dephospho-CoA + diphosphate. It participates in cofactor biosynthesis; coenzyme A biosynthesis; CoA from (R)-pantothenate: step 4/5. In terms of biological role, reversibly transfers an adenylyl group from ATP to 4'-phosphopantetheine, yielding dephospho-CoA (dPCoA) and pyrophosphate. This is Phosphopantetheine adenylyltransferase from Methylobacterium nodulans (strain LMG 21967 / CNCM I-2342 / ORS 2060).